The following is a 98-amino-acid chain: Large ribosomal subunit protein uL23 (98 aa).

This sequence belongs to the universal ribosomal protein uL23 family. In terms of assembly, part of the 50S ribosomal subunit. Contacts protein L29, and trigger factor when it is bound to the ribosome.

Functionally, one of the early assembly proteins it binds 23S rRNA. One of the proteins that surrounds the polypeptide exit tunnel on the outside of the ribosome. Forms the main docking site for trigger factor binding to the ribosome. The polypeptide is Large ribosomal subunit protein uL23 (Clostridium beijerinckii (strain ATCC 51743 / NCIMB 8052) (Clostridium acetobutylicum)).